The chain runs to 177 residues: Nucleoside triphosphate/diphosphate phosphatase (177 aa).

The active-site Proton donor is Arg23. The Mg(2+) site is built by Asn87, Asp103, Asp105, Asp107, Asp120, and Glu123.

This sequence belongs to the Ntdp family. Mg(2+) serves as cofactor.

The catalysed reaction is a ribonucleoside 5'-triphosphate + H2O = a ribonucleoside 5'-diphosphate + phosphate + H(+). It carries out the reaction a ribonucleoside 5'-diphosphate + H2O = a ribonucleoside 5'-phosphate + phosphate + H(+). Functionally, has nucleoside phosphatase activity towards nucleoside triphosphates and nucleoside diphosphates. The polypeptide is Nucleoside triphosphate/diphosphate phosphatase (Streptococcus pyogenes serotype M3 (strain ATCC BAA-595 / MGAS315)).